The sequence spans 371 residues: NDMA-dependent alcohol dehydrogenase (371 aa).

The Zn(2+) site is built by Cys40, His61, Cys91, Cys94, Cys97, Cys105, and Cys167.

It belongs to the zinc-containing alcohol dehydrogenase family. In terms of assembly, homotrimer. NADH serves as cofactor.

The enzyme catalyses N,N-dimethyl-4-nitrosoaniline + a primary alcohol = 4-(hydroxylamino)-N,N-dimethylaniline + an aldehyde. The catalysed reaction is ethanol + A = acetaldehyde + AH2. With respect to regulation, inhibited by trans-4-(N,N-dimethylamino)-cinnamaldehyde through direct binding to the catalytic zinc ion in a substrate-like geometry. Isobutyramide acts as a competitive inhibitor with respect to the electron acceptor NDMA. Acetaldehyde, AMP, ADP, ATP, as well as CuSO(4), FeSO(4), HgCl(2), NiCl(2), ZnSO(4), KCN, and NaN(3) are additional inhibitors of the catalytic activity. Functionally, catalytically different from common alcohol dehydrogenases. Effective in oxidizing ethanol, other primary alcohols and benzylalcohol only in the presence of p-nitroso-N,N-dimethylaniline (NDMA) as an electron acceptor. NADH acts as a cofactor here instead as a coenzyme. The protein is NDMA-dependent alcohol dehydrogenase of Amycolatopsis methanolica.